Here is a 79-residue protein sequence, read N- to C-terminus: Putative defensin-like protein 274 (79 aa).

The signal sequence occupies residues 1–23 (MASSRFQLVALLVVFSLVISITA). 4 disulfides stabilise this stretch: cysteine 35–cysteine 76, cysteine 41–cysteine 64, cysteine 47–cysteine 74, and cysteine 51–cysteine 75.

Belongs to the DEFL family.

The protein resides in the secreted. In Arabidopsis thaliana (Mouse-ear cress), this protein is Putative defensin-like protein 274.